The primary structure comprises 258 residues: 5'-nucleotidase SurE (258 aa).

4 residues coordinate a divalent metal cation: D8, D9, S39, and N95.

Belongs to the SurE nucleotidase family. A divalent metal cation is required as a cofactor.

Its subcellular location is the cytoplasm. It carries out the reaction a ribonucleoside 5'-phosphate + H2O = a ribonucleoside + phosphate. Functionally, nucleotidase that shows phosphatase activity on nucleoside 5'-monophosphates. The protein is 5'-nucleotidase SurE of Methanobrevibacter smithii (strain ATCC 35061 / DSM 861 / OCM 144 / PS).